The sequence spans 126 residues: Hydrogenase maturation factor HypA (126 aa).

His2 serves as a coordination point for Ni(2+). Zn(2+) is bound by residues Cys78, Cys81, Cys97, and Cys100.

The protein belongs to the HypA/HybF family.

Its function is as follows. Involved in the maturation of [NiFe] hydrogenases. Required for nickel insertion into the metal center of the hydrogenase. The protein is Hydrogenase maturation factor HypA of Methanococcus maripaludis (strain C7 / ATCC BAA-1331).